The chain runs to 93 residues: Small ribosomal subunit protein uS19 (93 aa).

The protein belongs to the universal ribosomal protein uS19 family.

Its function is as follows. Protein S19 forms a complex with S13 that binds strongly to the 16S ribosomal RNA. In Mycolicibacterium paratuberculosis (strain ATCC BAA-968 / K-10) (Mycobacterium paratuberculosis), this protein is Small ribosomal subunit protein uS19.